Consider the following 426-residue polypeptide: Histidine--tRNA ligase 1 (426 aa).

The protein belongs to the class-II aminoacyl-tRNA synthetase family. In terms of assembly, homodimer.

Its subcellular location is the cytoplasm. It carries out the reaction tRNA(His) + L-histidine + ATP = L-histidyl-tRNA(His) + AMP + diphosphate + H(+). This is Histidine--tRNA ligase 1 from Bacillus cereus (strain ATCC 14579 / DSM 31 / CCUG 7414 / JCM 2152 / NBRC 15305 / NCIMB 9373 / NCTC 2599 / NRRL B-3711).